A 676-amino-acid chain; its full sequence is ATP-dependent RNA helicase dbp-9 (676 aa).

Positions 1–97 are disordered; sequence MAKRKLNETD…SEKDDADLTF (97 aa). Basic and acidic residues predominate over residues 70 to 90; that stretch reads QQLKDEQKQQDEKDEKKQSEK. Residues 95–123 carry the Q motif motif; the sequence is LTFSDLGLDPRLVQAVAKQSFEKPTLVQR. Residues 126–304 enclose the Helicase ATP-binding domain; sequence IPLALAGQDV…KGFFCRNPTM (179 aa). 139-146 provides a ligand contact to ATP; the sequence is AKTGSGKT. A DEAD box motif is present at residues 251–254; sequence DEAD. Positions 317–541 constitute a Helicase C-terminal domain; the sequence is KLTQFYVKCG…PYNFNKDQME (225 aa). The span at 410–432 shows a compositional bias: basic and acidic residues; that stretch reads EDEKTEEKKEEQGEKKEGDEKKN. 2 disordered regions span residues 410 to 444 and 633 to 676; these read EDEKTEEKKEEQGEKKEGDEKKNGKGKKKKGRRDQ and FKKQ…RVRK. Residues 642–663 show a composition bias toward basic residues; that stretch reads TRGKKGAKGGKGGHGKYKKGPG.

Belongs to the DEAD box helicase family. DDX56/DBP9 subfamily.

Its subcellular location is the nucleus. The protein localises to the nucleolus. The enzyme catalyses ATP + H2O = ADP + phosphate + H(+). Its function is as follows. ATP-binding RNA helicase involved in the biogenesis of 60S ribosomal subunits and is required for the normal formation of 25S and 5.8S rRNAs. The sequence is that of ATP-dependent RNA helicase dbp-9 (dbp-9) from Neurospora crassa (strain ATCC 24698 / 74-OR23-1A / CBS 708.71 / DSM 1257 / FGSC 987).